A 177-amino-acid chain; its full sequence is Dual-action ribosomal maturation protein DarP (177 aa).

The tract at residues 1–26 (MKIVGDSEHFKQPYDSDEEYVSKTED) is disordered.

The protein belongs to the DarP family.

It localises to the cytoplasm. In terms of biological role, member of a network of 50S ribosomal subunit biogenesis factors which assembles along the 30S-50S interface, preventing incorrect 23S rRNA structures from forming. Promotes peptidyl transferase center (PTC) maturation. This Shewanella sp. (strain ANA-3) protein is Dual-action ribosomal maturation protein DarP.